We begin with the raw amino-acid sequence, 144 residues long: Eukaryotic translation initiation factor 1A, X-chromosomal (144 aa).

Residues 1–15 (MPKNKGKGGKNRRRG) show a composition bias toward basic residues. Disordered stretches follow at residues 1-26 (MPKNKGKGGKNRRRGKNENESEKREL) and 114-144 (KINETDTFGPGDDDEIQFDDIGDDDEDIDDI). Over residues 16–26 (KNENESEKREL) the composition is skewed to basic and acidic residues. Positions 22–96 (EKRELVFKED…NKADVILKYN (75 aa)) constitute an S1-like domain. The segment covering 124–144 (GDDDEIQFDDIGDDDEDIDDI) has biased composition (acidic residues).

It belongs to the eIF-1A family. Component of the 43S pre-initiation complex (43S PIC), which is composed of the 40S ribosomal subunit, EIF1, eIF1A (EIF1AX), eIF3 complex, EIF5 and eIF2-GTP-initiator tRNA complex (eIF2 ternary complex). Interacts with EIF5; this interaction contributes to the maintenance of EIF1 within the open 43S PIC. Interacts through its C-terminal domain (CTD) with the CTD of EIF5B; from the location of the start codon by the 43S complex until the formation of the 80S complex. As to quaternary structure, (Microbial infection) Interacts with human respiratory syncytial virus (HRSV) nucleoprotein; this interaction recruits EIF1AX to the viral replication complex to facilitate viral genomic RNA synthesis and virus production.

Its subcellular location is the cytoplasm. Component of the 43S pre-initiation complex (43S PIC), which binds to the mRNA cap-proximal region, scans mRNA 5'-untranslated region, and locates the initiation codon. This protein enhances formation of the cap-proximal complex. Together with EIF1, facilitates scanning, start codon recognition, promotion of the assembly of 48S complex at the initiation codon (43S PIC becomes 48S PIC after the start codon is reached), and dissociation of aberrant complexes. After start codon location, together with EIF5B orients the initiator methionine-tRNA in a conformation that allows 60S ribosomal subunit joining to form the 80S initiation complex. Is released after 80S initiation complex formation, just after GTP hydrolysis by EIF5B, and before release of EIF5B. Its globular part is located in the A site of the 40S ribosomal subunit. Its interaction with EIF5 during scanning contribute to the maintenance of EIF1 within the open 43S PIC. In contrast to yeast orthologs, does not bind EIF1. The polypeptide is Eukaryotic translation initiation factor 1A, X-chromosomal (EIF1AX) (Homo sapiens (Human)).